The primary structure comprises 121 residues: MARIAGVDIPNDKRVVISLTYVYGIGLSTSKKILAAAGISEDIRVKDLTPDQEDAIRREVDAIKVEGDLRREVNLNIKRLMEIGSYRGIRHRRGLPVRGQNTKNNARTRKGKAVAIAGKKK.

The disordered stretch occupies residues 96–121; it reads PVRGQNTKNNARTRKGKAVAIAGKKK. Over residues 106-121 the composition is skewed to basic residues; it reads ARTRKGKAVAIAGKKK.

The protein belongs to the universal ribosomal protein uS13 family. In terms of assembly, part of the 30S ribosomal subunit. Forms a loose heterodimer with protein S19. Forms two bridges to the 50S subunit in the 70S ribosome.

Its function is as follows. Located at the top of the head of the 30S subunit, it contacts several helices of the 16S rRNA. In the 70S ribosome it contacts the 23S rRNA (bridge B1a) and protein L5 of the 50S subunit (bridge B1b), connecting the 2 subunits; these bridges are implicated in subunit movement. Contacts the tRNAs in the A and P-sites. In Streptococcus agalactiae serotype Ia (strain ATCC 27591 / A909 / CDC SS700), this protein is Small ribosomal subunit protein uS13.